The following is a 208-amino-acid chain: Large ribosomal subunit protein uL3 (208 aa).

Residue Gln-149 is modified to N5-methylglutamine.

This sequence belongs to the universal ribosomal protein uL3 family. Part of the 50S ribosomal subunit. Forms a cluster with proteins L14 and L19. Methylated by PrmB.

Functionally, one of the primary rRNA binding proteins, it binds directly near the 3'-end of the 23S rRNA, where it nucleates assembly of the 50S subunit. The sequence is that of Large ribosomal subunit protein uL3 from Haemophilus influenzae (strain PittGG).